Here is a 146-residue protein sequence, read N- to C-terminus: Hemoglobin subunit beta (146 aa).

Val-1 is modified (N-acetylvaline). In terms of domain architecture, Globin spans 2-146; the sequence is HLSAEEKAAV…VANALAHKYH (145 aa). Thr-12 is modified (phosphothreonine). Position 44 is a phosphoserine (Ser-44). At Lys-59 the chain carries N6-acetyllysine. Position 63 (His-63) interacts with heme b. Lys-82 is modified (N6-acetyllysine). His-92 contacts heme b. The residue at position 93 (Cys-93) is an S-nitrosocysteine. Position 144 is an N6-acetyllysine (Lys-144).

Belongs to the globin family. Heterotetramer of two alpha chains and two beta chains. As to expression, red blood cells.

Its function is as follows. Involved in oxygen transport from the lung to the various peripheral tissues. This Ctenodactylus gundi (Northern gundi) protein is Hemoglobin subunit beta (HBB).